The primary structure comprises 192 residues: Holliday junction branch migration complex subunit RuvA (192 aa).

The tract at residues 1–64 (MIGRLTGILA…EDGHYLYGFL (64 aa)) is domain I. Positions 65-143 (TEAERFAFRQ…DATGVSLHPA (79 aa)) are domain II. Residues 144 to 149 (VDDSKQ) form a flexible linker region. The tract at residues 149–192 (QDISNALLALGYNEKEAASAMKQLPADVSTSDGIRAALKLLSKV) is domain III.

Belongs to the RuvA family. In terms of assembly, homotetramer. Forms an RuvA(8)-RuvB(12)-Holliday junction (HJ) complex. HJ DNA is sandwiched between 2 RuvA tetramers; dsDNA enters through RuvA and exits via RuvB. An RuvB hexamer assembles on each DNA strand where it exits the tetramer. Each RuvB hexamer is contacted by two RuvA subunits (via domain III) on 2 adjacent RuvB subunits; this complex drives branch migration. In the full resolvosome a probable DNA-RuvA(4)-RuvB(12)-RuvC(2) complex forms which resolves the HJ.

It is found in the cytoplasm. The RuvA-RuvB-RuvC complex processes Holliday junction (HJ) DNA during genetic recombination and DNA repair, while the RuvA-RuvB complex plays an important role in the rescue of blocked DNA replication forks via replication fork reversal (RFR). RuvA specifically binds to HJ cruciform DNA, conferring on it an open structure. The RuvB hexamer acts as an ATP-dependent pump, pulling dsDNA into and through the RuvAB complex. HJ branch migration allows RuvC to scan DNA until it finds its consensus sequence, where it cleaves and resolves the cruciform DNA. This is Holliday junction branch migration complex subunit RuvA from Dechloromonas aromatica (strain RCB).